The primary structure comprises 373 residues: Glutamine synthetase (373 aa).

Ala-2 is modified (N-acetylalanine). The tract at residues 2–25 (ATSASSHLNKGIKQMYMSLPQGEK) is required for glutamine-induced ubiquitination by CRL4(CRBN) and proteasomal degradation. N6-acetyllysine occurs at positions 11 and 14. Residues 24–106 (EKVQAMYIWV…VLCEVFKYNR (83 aa)) form the GS beta-grasp domain. At Tyr-104 the chain carries Phosphotyrosine. The GS catalytic domain occupies 113-373 (LRHICKRIMD…TGDEPFQYKN (261 aa)). Residue Glu-134 participates in ATP binding. The Mn(2+) site is built by Glu-134, Glu-136, Glu-196, and Glu-203. 203-208 (EFQIGP) is an ATP binding site. Residue 246-247 (NW) coordinates L-glutamate. His-253 serves as a coordination point for Mn(2+). ATP is bound by residues 255 to 257 (NFS), Arg-319, and Arg-324. L-glutamate is bound at residue Arg-319. 336 to 338 (YFE) serves as a coordination point for ADP. Glu-338 contacts Mn(2+). Residue Arg-340 coordinates L-glutamate. At Ser-343 the chain carries Phosphoserine.

Belongs to the glutamine synthetase family. As to quaternary structure, decamer; composed of two pentamers. Interacts with PALMD. Interacts with RHOJ. Interacts with BEST2; this interaction tethers a fraction of GLUL to the membrane, causing a decrease of cytosolic glutamine synthase (GS) activity and inhibits the chloride channel activity of BEST2 by affecting the gating at the aperture in the absence of intracellular glutamate. It depends on Mg(2+) as a cofactor. Requires Mn(2+) as cofactor. Acetylated by EP300/p300; acetylation is stimulated by increased glutamine levels and promotes ubiquitin-mediated proteasomal degradation. In terms of processing, palmitoylated; undergoes autopalmitoylation. Post-translationally, ubiquitinated by ZNRF1. Ubiquitinated by the DCX (DDB1-CUL4-X-box) E3 ubiquitin-protein ligase complex called CRL4(CRBN), leading to proteasomal degradation. As to expression, expressed in microvascular endothelial cells.

The protein resides in the cytoplasm. It localises to the cytosol. Its subcellular location is the microsome. It is found in the mitochondrion. The protein localises to the cell membrane. The enzyme catalyses L-glutamate + NH4(+) + ATP = L-glutamine + ADP + phosphate + H(+). It carries out the reaction L-cysteinyl-[protein] + hexadecanoyl-CoA = S-hexadecanoyl-L-cysteinyl-[protein] + CoA. Glutamine synthetase activity is inhibited by methionine sulfoximine (MSO). Glutamine synthetase that catalyzes the ATP-dependent conversion of glutamate and ammonia to glutamine. Its role depends on tissue localization: in the brain, it regulates the levels of toxic ammonia and converts neurotoxic glutamate to harmless glutamine, whereas in the liver, it is one of the enzymes responsible for the removal of ammonia. Plays a key role in ammonium detoxification during erythropoiesis: the glutamine synthetase activity is required to remove ammonium generated by porphobilinogen deaminase (HMBS) during heme biosynthesis to prevent ammonium accumulation and oxidative stress. Essential for proliferation of fetal skin fibroblasts. Independently of its glutamine synthetase activity, required for endothelial cell migration during vascular development. Involved in angiogenesis by regulating membrane localization and activation of the GTPase RHOJ, possibly by promoting RHOJ palmitoylation. May act as a palmitoyltransferase for RHOJ: able to autopalmitoylate and then transfer the palmitoyl group to RHOJ. Plays a role in ribosomal 40S subunit biogenesis. Through the interaction with BEST2, inhibits BEST2 channel activity by affecting the gating at the aperture in the absence of intracellular L-glutamate, but sensitizes BEST2 to intracellular L-glutamate, which promotes the opening of BEST2 and thus relieves its inhibitory effect on BEST2. This chain is Glutamine synthetase, found in Mus musculus (Mouse).